The primary structure comprises 27 residues: IPQDLSGKMLTFPKEEDDDDVKLMTPK.

A disordered region spans residues 1-27; that stretch reads IPQDLSGKMLTFPKEEDDDDVKLMTPK. The Pentraxin (PTX) domain occupies 6–27; it reads SGKMLTFPKEEDDDDVKLMTPK.

This sequence belongs to the pentraxin family. As to quaternary structure, homopentamer. Pentraxin (or pentaxin) have a discoid arrangement of 5 non-covalently bound subunits. Exists as a dimer under reducing conditions. Ca(2+) is required as a cofactor. In terms of processing, glycosylated.

The protein localises to the secreted. In terms of biological role, displays several functions associated with host defense: it promotes agglutination, bacterial capsular swelling, phagocytosis, and complement fixation through its calcium-dependent binding to phosphorylcholine. The sequence is that of C-reactive protein P1 from Gadus morhua (Atlantic cod).